The primary structure comprises 353 residues: Methylthioribose-1-phosphate isomerase (353 aa).

Substrate contacts are provided by residues 48–50 (RGA), R94, and Q201. Residue D242 is the Proton donor of the active site. Position 252 to 253 (252 to 253 (NK)) interacts with substrate.

It belongs to the eIF-2B alpha/beta/delta subunits family. MtnA subfamily.

The enzyme catalyses 5-(methylsulfanyl)-alpha-D-ribose 1-phosphate = 5-(methylsulfanyl)-D-ribulose 1-phosphate. The protein operates within amino-acid biosynthesis; L-methionine biosynthesis via salvage pathway; L-methionine from S-methyl-5-thio-alpha-D-ribose 1-phosphate: step 1/6. Functionally, catalyzes the interconversion of methylthioribose-1-phosphate (MTR-1-P) into methylthioribulose-1-phosphate (MTRu-1-P). This is Methylthioribose-1-phosphate isomerase from Roseiflexus sp. (strain RS-1).